Here is a 185-residue protein sequence, read N- to C-terminus: Ribosome-recycling factor (185 aa).

This sequence belongs to the RRF family.

It is found in the cytoplasm. In terms of biological role, responsible for the release of ribosomes from messenger RNA at the termination of protein biosynthesis. May increase the efficiency of translation by recycling ribosomes from one round of translation to another. The protein is Ribosome-recycling factor of Hamiltonella defensa subsp. Acyrthosiphon pisum (strain 5AT).